The primary structure comprises 135 residues: Protein Wnt-7a (135 aa).

Disulfide bonds link Cys3–Cys17 and Cys5–Cys12. The O-palmitoleoyl serine; by PORCN moiety is linked to residue Ser9. The interval 41–69 is disordered linker; that stretch reads VEPVRASRNKRPTFLKIKKPLSYRKPMDT. Disulfide bonds link Cys81–Cys112, Cys97–Cys107, Cys111–Cys134, and Cys130–Cys131. Residue Asn98 is glycosylated (N-linked (GlcNAc...) asparagine).

This sequence belongs to the Wnt family. Post-translationally, palmitoleoylation is required for efficient binding to frizzled receptors. Depalmitoleoylation leads to Wnt signaling pathway inhibition. In terms of tissue distribution, in embryo, in brain and ventral neural tube; in adults, in brain.

The protein localises to the secreted. The protein resides in the extracellular space. It localises to the extracellular matrix. Its function is as follows. Ligand for members of the frizzled family of seven transmembrane receptors that functions in the canonical Wnt/beta-catenin signaling pathway. Plays an important role in embryonic development, including dorsal versus ventral patterning during limb development, skeleton development and urogenital tract development. Required for central nervous system (CNS) angiogenesis and blood-brain barrier regulation. The chain is Protein Wnt-7a (wnt7a) from Xenopus laevis (African clawed frog).